The following is a 151-amino-acid chain: Large ribosomal subunit protein bL9 (151 aa).

Belongs to the bacterial ribosomal protein bL9 family.

Functionally, binds to the 23S rRNA. This is Large ribosomal subunit protein bL9 from Thermosipho africanus (strain TCF52B).